A 317-amino-acid polypeptide reads, in one-letter code: Protoheme IX farnesyltransferase (317 aa).

The next 9 helical transmembrane spans lie at 36–56 (VMVL…ATVN), 57–77 (PVIA…SGCL), 108–128 (LAFG…ASNW), 129–149 (LAAG…SMWL), 157–177 (IVIG…AVTG), 184–204 (LVLF…LALV), 230–247 (IVWY…PVWL), 251–273 (GWLY…VQVY), and 284–304 (AAMG…SALL).

It belongs to the UbiA prenyltransferase family. Protoheme IX farnesyltransferase subfamily.

Its subcellular location is the cell inner membrane. The enzyme catalyses heme b + (2E,6E)-farnesyl diphosphate + H2O = Fe(II)-heme o + diphosphate. Its pathway is porphyrin-containing compound metabolism; heme O biosynthesis; heme O from protoheme: step 1/1. Converts heme B (protoheme IX) to heme O by substitution of the vinyl group on carbon 2 of heme B porphyrin ring with a hydroxyethyl farnesyl side group. The sequence is that of Protoheme IX farnesyltransferase from Methylorubrum populi (strain ATCC BAA-705 / NCIMB 13946 / BJ001) (Methylobacterium populi).